Here is a 904-residue protein sequence, read N- to C-terminus: MLIKLLTKVFGSRNDRTLRRMRKVVDLINRMEPEVEKLTNEELRAKTDEFRERLANGAVLETLIPEAFAVVREASKRVFGMRHFDVQLLGGMVLNERCIAEMRTGEGKTLTATLPAYLNALSGRGVHVVTVNDYLAQRDAENNRPLFEFLGLSVGINLPNMPAPAKRAAYAADITYGTNNEFGFDYLRDNMAFSPEERVQRKLHYALVDEVDSILIDEARTPLIISGPAEDSSEMYIRVNKLIPKLIRQEKEDSDTFQGEGHFSVDEKSRQVHLTERGLIKIEEMLVEAGIMEEGESLYSPANIMLMHHVTAALRAHVLFTRDVDYIVKDGEVIIVDEHTGRTMQGRRWSDGLHQAVEAKEGVEIQNENQTLASITFQNYFRLYEKLAGMTGTADTEAFEFSSIYKLDTIVVPTNRPMIRKDLADLVYMTEQEKIGAIIEDIRERTANGQPVLVGTISIEKSEVVSAELTKAGIEHKVLNAKFHAMEAEIVSQAGQPGAVTIATNMAGRGTDIVLGGSWQSEIALLENPTEDQIAAIKAAWQIRHDAVLASGGLHIIGTERHESRRIDNQLRGRAGRQGDAGSSRFYLSMEDALMRIFASDRVSGMMRKLGMKPGEAIEHPWVTKAIANAQRKVESRNFDIRKQLLEYDDVASDQRRAIYSQRNELLDVADVSETINSIREDVFKTVIDSYIPTQSLEEMWDVEGLEQRLKNDFDLDMPIAQWLEDEPQLHEETLRERILQLAIADYQRKEEVVGFDMMRNFEKGVMLQTLDSLWKEHLAAMDYLRQGIHLRGYAQKDPKQEYKRESFAMFAAMLESLKYEVISVLSKVQVRMPEEVEALEVQRREEAERLAKQQQLSHESDNSALMSQEEANVAASLERKVGRNDPCPCGSGKKYKQCHGRLQ.

ATP is bound by residues Gln-87, Gly-105–Thr-109, and Asp-512. Residues Leu-851 to Gln-904 are disordered. The segment covering Lys-853–Glu-871 has biased composition (polar residues). Residues Cys-888, Cys-890, Cys-899, and His-900 each coordinate Zn(2+). Residues Lys-894 to Gln-904 are compositionally biased toward basic residues.

This sequence belongs to the SecA family. In terms of assembly, monomer and homodimer. Part of the essential Sec protein translocation apparatus which comprises SecA, SecYEG and auxiliary proteins SecDF-YajC and YidC. Requires Zn(2+) as cofactor.

The protein resides in the cell inner membrane. It is found in the cytoplasm. It catalyses the reaction ATP + H2O + cellular proteinSide 1 = ADP + phosphate + cellular proteinSide 2.. Part of the Sec protein translocase complex. Interacts with the SecYEG preprotein conducting channel. Has a central role in coupling the hydrolysis of ATP to the transfer of proteins into and across the cell membrane, serving both as a receptor for the preprotein-SecB complex and as an ATP-driven molecular motor driving the stepwise translocation of polypeptide chains across the membrane. This Yersinia enterocolitica serotype O:8 / biotype 1B (strain NCTC 13174 / 8081) protein is Protein translocase subunit SecA.